A 224-amino-acid chain; its full sequence is Germin-like protein 8-8 (224 aa).

The first 22 residues, 1 to 22 (MASPSFCLLAALLALVSWQAIA), serve as a signal peptide directing secretion. Residues Cys-32 and Cys-47 are joined by a disulfide bond. In terms of domain architecture, Cupin type-1 spans 62–212 (AMLDTPRKTN…AFQVEKGTID (151 aa)). A glycan (N-linked (GlcNAc...) asparagine) is linked at Asn-76. Positions 109, 111, and 116 each coordinate Mn(2+). Asn-135 carries an N-linked (GlcNAc...) asparagine glycan. His-157 contacts Mn(2+).

This sequence belongs to the germin family. In terms of assembly, oligomer (believed to be a pentamer but probably hexamer).

Its subcellular location is the secreted. The protein resides in the extracellular space. It is found in the apoplast. Its function is as follows. Plays a role in broad-spectrum disease resistance. Probably has no oxalate oxidase activity even if the active site is conserved. The polypeptide is Germin-like protein 8-8 (Oryza sativa subsp. japonica (Rice)).